Reading from the N-terminus, the 755-residue chain is Xaa-Pro dipeptidyl-peptidase (755 aa).

Active-site charge relay system residues include serine 348, aspartate 468, and histidine 498.

Belongs to the peptidase S15 family. In terms of assembly, homodimer.

The protein resides in the cytoplasm. It carries out the reaction Hydrolyzes Xaa-Pro-|- bonds to release unblocked, N-terminal dipeptides from substrates including Ala-Pro-|-p-nitroanilide and (sequentially) Tyr-Pro-|-Phe-Pro-|-Gly-Pro-|-Ile.. Removes N-terminal dipeptides sequentially from polypeptides having unsubstituted N-termini provided that the penultimate residue is proline. This is Xaa-Pro dipeptidyl-peptidase from Streptococcus thermophilus (strain ATCC BAA-491 / LMD-9).